Consider the following 146-residue polypeptide: Large ribosomal subunit protein uL16 (146 aa).

Belongs to the universal ribosomal protein uL16 family. As to quaternary structure, part of the 50S ribosomal subunit.

In terms of biological role, binds 23S rRNA and is also seen to make contacts with the A and possibly P site tRNAs. The protein is Large ribosomal subunit protein uL16 of Caulobacter sp. (strain K31).